A 326-amino-acid polypeptide reads, in one-letter code: Phospholipid scramblase 4 (326 aa).

The disordered stretch occupies residues 1–32 (MSGLVPTAPEQPTEEMENQIKSPTAVPDAPPD). Positions 1–94 (MSGLVPTAPE…PVTNQPAPIM (94 aa)) are proline-rich domain (PRD). The Cytoplasmic portion of the chain corresponds to 1-299 (MSGLVPTAPE…IRFPLALDVK (299 aa)). An SH3-binding 1 motif is present at residues 18 to 25 (NQIKSPTA). The PPxY motif signature appears at 30 to 33 (PPDY). The SH3-binding 2 motif lies at 41–49 (PAGPVASPS). Phosphotyrosine; by ABL is present on residues Tyr79 and Tyr84. Positions 94–102 (MWMAGPAPV) match the SH3-binding 3 motif. Residues Cys193, Cys194, Cys195, Cys197, and Cys198 are each lipidated (S-palmitoyl cysteine). The helical transmembrane segment at 300-316 (MKAMIFGSCFLIDFMYF) threads the bilayer. Over 317–326 (ERPPPRRMSR) the chain is Extracellular.

This sequence belongs to the phospholipid scramblase family. As to quaternary structure, interacts with PDCD6. Interacts with KPNA2; this interaction mediates the nucleus import of PLSCR4. Requires Ca(2+) as cofactor. Mg(2+) is required as a cofactor. It depends on Zn(2+) as a cofactor.

Its subcellular location is the cell membrane. The protein localises to the nucleus. It carries out the reaction a 1,2-diacyl-sn-glycero-3-phosphocholine(in) = a 1,2-diacyl-sn-glycero-3-phosphocholine(out). It catalyses the reaction a 1,2-diacyl-sn-glycero-3-phospho-L-serine(in) = a 1,2-diacyl-sn-glycero-3-phospho-L-serine(out). Catalyzes metal ion-induced ATP-independent rapid bidirectional and non-specific movement of phospholipids (lipid scrambling or lipid flip-flop) between the inner and outer leaflet of the plasma membrane and participates in the redistribution of phospholipids between membrane leaflets. Metal ions bind to the calcium-binding site and induce conformation change in the protein. Has a greater affi nity for Ca(2+) than Mg(2+) and Zn(2+). This is Phospholipid scramblase 4 from Mus musculus (Mouse).